An 85-amino-acid chain; its full sequence is Hepcidin (85 aa).

A signal peptide spans 1 to 24 (MKTFSVAVAVAVVLAFICLQESSA). Positions 25-64 (VPVTEVQELEEPMSNEYQEMPVESWKMPYNNRHKRHSSPG) are excised as a propeptide. Intrachain disulfides connect Cys66–Cys83, Cys69–Cys72, Cys70–Cys79, and Cys73–Cys82.

As to expression, predominantly expressed in liver.

The protein localises to the secreted. In terms of biological role, seems to act as a signaling molecule involved in the maintenance of iron homeostasis. Seems to be required in conjunction with HFE to regulate both intestinal iron absorption and iron storage in macrophages. Functionally, antimicrobial activity against Gram-negative bacteria such as E.coli. This chain is Hepcidin (hamp), found in Morone chrysops x Morone saxatilis (White bass x Striped bass).